The following is a 307-amino-acid chain: Acetaldehyde dehydrogenase 2 (307 aa).

Residue 13–16 coordinates NAD(+); sequence SGNI. C132 acts as the Acyl-thioester intermediate in catalysis. Residues 163–171 and N274 each bind NAD(+); that span reads SIGPGTRAN.

It belongs to the acetaldehyde dehydrogenase family.

The catalysed reaction is acetaldehyde + NAD(+) + CoA = acetyl-CoA + NADH + H(+). The polypeptide is Acetaldehyde dehydrogenase 2 (Methylibium petroleiphilum (strain ATCC BAA-1232 / LMG 22953 / PM1)).